A 213-amino-acid chain; its full sequence is Phosphatidylserine decarboxylase proenzyme (213 aa).

The Schiff-base intermediate with substrate; via pyruvic acid role is filled by Ser182. Ser182 carries the pyruvic acid (Ser); by autocatalysis modification.

This sequence belongs to the phosphatidylserine decarboxylase family. PSD-A subfamily. In terms of assembly, heterodimer of a large membrane-associated beta subunit and a small pyruvoyl-containing alpha subunit. Requires pyruvate as cofactor. In terms of processing, is synthesized initially as an inactive proenzyme. Formation of the active enzyme involves a self-maturation process in which the active site pyruvoyl group is generated from an internal serine residue via an autocatalytic post-translational modification. Two non-identical subunits are generated from the proenzyme in this reaction, and the pyruvate is formed at the N-terminus of the alpha chain, which is derived from the carboxyl end of the proenzyme. The post-translation cleavage follows an unusual pathway, termed non-hydrolytic serinolysis, in which the side chain hydroxyl group of the serine supplies its oxygen atom to form the C-terminus of the beta chain, while the remainder of the serine residue undergoes an oxidative deamination to produce ammonia and the pyruvoyl prosthetic group on the alpha chain.

The protein resides in the cell membrane. It catalyses the reaction a 1,2-diacyl-sn-glycero-3-phospho-L-serine + H(+) = a 1,2-diacyl-sn-glycero-3-phosphoethanolamine + CO2. The protein operates within phospholipid metabolism; phosphatidylethanolamine biosynthesis; phosphatidylethanolamine from CDP-diacylglycerol: step 2/2. In terms of biological role, catalyzes the formation of phosphatidylethanolamine (PtdEtn) from phosphatidylserine (PtdSer). This chain is Phosphatidylserine decarboxylase proenzyme, found in Geotalea uraniireducens (strain Rf4) (Geobacter uraniireducens).